Consider the following 313-residue polypeptide: Tyrosine recombinase XerD (313 aa).

One can recognise a Core-binding (CB) domain in the interval 17 to 102 (EDNDVIIEQF…TLRRFFQYLY (86 aa)). A Tyr recombinase domain is found at 123 to 307 (RLPKDLSEQQ…ATERLKVLHQ (185 aa)). Residues arginine 163, lysine 187, histidine 259, arginine 262, and histidine 285 contribute to the active site. Residue tyrosine 294 is the O-(3'-phospho-DNA)-tyrosine intermediate of the active site.

The protein belongs to the 'phage' integrase family. XerD subfamily. In terms of assembly, forms a cyclic heterotetrameric complex composed of two molecules of XerC and two molecules of XerD, in which XerC interacts with XerD via its C-terminal region, XerD interacts with XerC via its C-terminal region and so on.

The protein localises to the cytoplasm. FtsK may regulate the catalytic switch between XerC and XerD in the heterotetrameric complex during the two steps of the recombination process. Its function is as follows. Site-specific tyrosine recombinase, which acts by catalyzing the cutting and rejoining of the recombining DNA molecules. Binds cooperatively to specific DNA consensus sequences that are separated from XerC binding sites by a short central region, forming the heterotetrameric XerC-XerD complex that recombines DNA substrates. The complex is essential to convert dimers of the bacterial chromosome into monomers to permit their segregation at cell division. It also contributes to the segregational stability of plasmids. In the complex XerD specifically exchanges the bottom DNA strands. The sequence is that of Tyrosine recombinase XerD from Proteus mirabilis.